The following is a 144-amino-acid chain: ATP synthase subunit 9, mitochondrial (144 aa).

The transit peptide at 1–63 (MASTRVLASR…ATRQITQKRA (63 aa)) directs the protein to the mitochondrion. 2 helical membrane-spanning segments follow: residues 83–103 (TAAI…AALL) and 120–140 (AILG…VALM).

It belongs to the ATPase C chain family. As to quaternary structure, F-type ATPases have 2 components, CF(1) - the catalytic core - and CF(0) - the membrane proton channel. CF(1) has five subunits: alpha(3), beta(3), gamma(1), delta(1), epsilon(1). CF(0) has three main subunits: a, b and c.

The protein localises to the mitochondrion membrane. Its function is as follows. Mitochondrial membrane ATP synthase (F(1)F(0) ATP synthase or Complex V) produces ATP from ADP in the presence of a proton gradient across the membrane which is generated by electron transport complexes of the respiratory chain. F-type ATPases consist of two structural domains, F(1) - containing the extramembraneous catalytic core and F(0) - containing the membrane proton channel, linked together by a central stalk and a peripheral stalk. During catalysis, ATP synthesis in the catalytic domain of F(1) is coupled via a rotary mechanism of the central stalk subunits to proton translocation. Part of the complex F(0) domain. A homomeric c-ring of probably 10 subunits is part of the complex rotary element. The protein is ATP synthase subunit 9, mitochondrial (ATP9) of Podospora anserina (Pleurage anserina).